Reading from the N-terminus, the 255-residue chain is Undecaprenyl-diphosphatase (255 aa).

The next 6 helical transmembrane spans lie at 1 to 21, 75 to 95, 96 to 116, 174 to 194, 203 to 223, and 234 to 254; these read MDII…FLPI, IIIS…IVYQ, LFTV…FLIV, TEFS…FDIV, GDIS…LITI, and NFVP…MFFV.

Belongs to the UppP family.

It localises to the cell membrane. The enzyme catalyses di-trans,octa-cis-undecaprenyl diphosphate + H2O = di-trans,octa-cis-undecaprenyl phosphate + phosphate + H(+). Functionally, catalyzes the dephosphorylation of undecaprenyl diphosphate (UPP). This chain is Undecaprenyl-diphosphatase, found in Methanococcus aeolicus (strain ATCC BAA-1280 / DSM 17508 / OCM 812 / Nankai-3).